The sequence spans 280 residues: F420-dependent methylenetetrahydromethanopterin dehydrogenase (280 aa).

The protein belongs to the MTD family.

The enzyme catalyses 5,10-methylenetetrahydromethanopterin + oxidized coenzyme F420-(gamma-L-Glu)(n) + 2 H(+) = 5,10-methenyl-5,6,7,8-tetrahydromethanopterin + reduced coenzyme F420-(gamma-L-Glu)(n). It participates in one-carbon metabolism; methanogenesis from CO(2); 5,10-methylene-5,6,7,8-tetrahydromethanopterin from 5,10-methenyl-5,6,7,8-tetrahydromethanopterin (coenzyme F420 route): step 1/1. In terms of biological role, catalyzes the reversible reduction of methenyl-H(4)MPT(+) to methylene-H(4)MPT. The sequence is that of F420-dependent methylenetetrahydromethanopterin dehydrogenase from Methanoculleus marisnigri (strain ATCC 35101 / DSM 1498 / JR1).